The primary structure comprises 212 residues: Protein-L-isoaspartate O-methyltransferase (212 aa).

The active site involves serine 60.

This sequence belongs to the methyltransferase superfamily. L-isoaspartyl/D-aspartyl protein methyltransferase family.

Its subcellular location is the cytoplasm. The enzyme catalyses [protein]-L-isoaspartate + S-adenosyl-L-methionine = [protein]-L-isoaspartate alpha-methyl ester + S-adenosyl-L-homocysteine. Its function is as follows. Catalyzes the methyl esterification of L-isoaspartyl residues in peptides and proteins that result from spontaneous decomposition of normal L-aspartyl and L-asparaginyl residues. It plays a role in the repair and/or degradation of damaged proteins. This is Protein-L-isoaspartate O-methyltransferase from Pseudomonas entomophila (strain L48).